A 189-amino-acid polypeptide reads, in one-letter code: GTP cyclohydrolase 1 (189 aa).

Positions 78, 81, and 150 each coordinate Zn(2+).

It belongs to the GTP cyclohydrolase I family. Toroid-shaped homodecamer, composed of two pentamers of five dimers.

It catalyses the reaction GTP + H2O = 7,8-dihydroneopterin 3'-triphosphate + formate + H(+). It functions in the pathway cofactor biosynthesis; 7,8-dihydroneopterin triphosphate biosynthesis; 7,8-dihydroneopterin triphosphate from GTP: step 1/1. This is GTP cyclohydrolase 1 from Listeria monocytogenes serovar 1/2a (strain ATCC BAA-679 / EGD-e).